A 275-amino-acid polypeptide reads, in one-letter code: Urease accessory protein UreD (275 aa).

It belongs to the UreD family. As to quaternary structure, ureD, UreF and UreG form a complex that acts as a GTP-hydrolysis-dependent molecular chaperone, activating the urease apoprotein by helping to assemble the nickel containing metallocenter of UreC. The UreE protein probably delivers the nickel.

The protein resides in the cytoplasm. Required for maturation of urease via the functional incorporation of the urease nickel metallocenter. The chain is Urease accessory protein UreD from Cereibacter sphaeroides (strain ATCC 17025 / ATH 2.4.3) (Rhodobacter sphaeroides).